A 108-amino-acid polypeptide reads, in one-letter code: Evasin P1127 (108 aa).

The signal sequence occupies residues 1–28 (MEAKTFAFLEIAMFIALGIQTFVAVTDA). 3 cysteine pairs are disulfide-bonded: Cys-41/Cys-63, Cys-45/Cys-65, and Cys-56/Cys-76. Asn-44 carries N-linked (GlcNAc...) asparagine glycosylation. Residue Asn-89 is glycosylated (N-linked (GlcNAc...) asparagine).

It is found in the secreted. Salivary chemokine-binding protein which binds to host chemokines CXCL1, CXCL2, CXCL3, CXCL5 and CXCL8. This Ixodes ricinus (Common tick) protein is Evasin P1127.